The following is a 324-amino-acid chain: 7,8-didemethyl-8-hydroxy-5-deazariboflavin synthase (324 aa).

The region spanning 4 to 239 (VTYSKNVFIP…QEVAIQIPPN (236 aa)) is the Radical SAM core domain. Residues Cys18, Cys22, and Cys25 each coordinate [4Fe-4S] cluster.

It belongs to the radical SAM superfamily. CofG family. As to quaternary structure, consists of two subunits, CofG and CofH. [4Fe-4S] cluster is required as a cofactor.

The catalysed reaction is 5-amino-5-(4-hydroxybenzyl)-6-(D-ribitylimino)-5,6-dihydrouracil + S-adenosyl-L-methionine = 7,8-didemethyl-8-hydroxy-5-deazariboflavin + 5'-deoxyadenosine + L-methionine + NH4(+) + H(+). It participates in cofactor biosynthesis; coenzyme F0 biosynthesis. Functionally, catalyzes the radical-mediated synthesis of 7,8-didemethyl-8-hydroxy-5-deazariboflavin from 5-amino-5-(4-hydroxybenzyl)-6-(D-ribitylimino)-5,6-dihydrouracil. This is 7,8-didemethyl-8-hydroxy-5-deazariboflavin synthase from Archaeoglobus fulgidus (strain ATCC 49558 / DSM 4304 / JCM 9628 / NBRC 100126 / VC-16).